Here is a 290-residue protein sequence, read N- to C-terminus: Ribosomal RNA small subunit methyltransferase A (290 aa).

The S-adenosyl-L-methionine site is built by Asn-27, Leu-29, Gly-54, Glu-75, Asp-100, and Asn-125.

This sequence belongs to the class I-like SAM-binding methyltransferase superfamily. rRNA adenine N(6)-methyltransferase family. RsmA subfamily.

It is found in the cytoplasm. The enzyme catalyses adenosine(1518)/adenosine(1519) in 16S rRNA + 4 S-adenosyl-L-methionine = N(6)-dimethyladenosine(1518)/N(6)-dimethyladenosine(1519) in 16S rRNA + 4 S-adenosyl-L-homocysteine + 4 H(+). Functionally, specifically dimethylates two adjacent adenosines (A1518 and A1519) in the loop of a conserved hairpin near the 3'-end of 16S rRNA in the 30S particle. May play a critical role in biogenesis of 30S subunits. This Streptococcus thermophilus (strain CNRZ 1066) protein is Ribosomal RNA small subunit methyltransferase A.